Consider the following 199-residue polypeptide: Probable GTP-binding protein EngB (199 aa).

One can recognise an EngB-type G domain in the interval 28-199 (DLPEIALAGR…DSWDAILEQV (172 aa)). Residues 36–43 (GRSNVGKS), 63–67 (GKTQL), 81–84 (DVPG), 148–151 (TKAD), and 180–182 (FSS) contribute to the GTP site. Positions 43 and 65 each coordinate Mg(2+).

Belongs to the TRAFAC class TrmE-Era-EngA-EngB-Septin-like GTPase superfamily. EngB GTPase family. Mg(2+) serves as cofactor.

Its function is as follows. Necessary for normal cell division and for the maintenance of normal septation. In Streptococcus pyogenes serotype M6 (strain ATCC BAA-946 / MGAS10394), this protein is Probable GTP-binding protein EngB.